Reading from the N-terminus, the 286-residue chain is MPRFGAHMSISGGVSKSFARGESVGLDAMQIFAKNERQWTAKPISAEEMAAFQAEQQRTGIHPVIVHDSYLINLAAPADDLREKSIVAFADELERCAQLKIPYLVTHPGAHTGIGEEAGLVRVADAISRLLAEGVGGTTMILLETTAGQGTALGYRFEHLARLFELIPYHDRLGVCVDTCHIFAAGYDIRDPDTYDATFAELDRLVGLERVKCFHLNDSQKDLGSRVDRHAHIGQGCIGTEAFRLLVNDPRFAHLPMIIETPKGEDMAEDRMNLALLRSLVRITAA.

Zn(2+) is bound by residues His-67, His-107, Glu-144, Asp-178, His-181, His-215, Asp-228, His-230, and Glu-260.

The protein belongs to the AP endonuclease 2 family. It depends on Zn(2+) as a cofactor.

It catalyses the reaction Endonucleolytic cleavage to 5'-phosphooligonucleotide end-products.. Its function is as follows. Endonuclease IV plays a role in DNA repair. It cleaves phosphodiester bonds at apurinic or apyrimidinic (AP) sites, generating a 3'-hydroxyl group and a 5'-terminal sugar phosphate. The sequence is that of Probable endonuclease 4 from Chloroflexus aggregans (strain MD-66 / DSM 9485).